Reading from the N-terminus, the 128-residue chain is Protein BEX1 (128 aa).

The disordered stretch occupies residues 1–55 (MESKDQGAKNLNMENDHQKKEEKEEKPQDTIKREPVVAPTFEAGKNCAPRGGRRR). Over residues 14-35 (ENDHQKKEEKEEKPQDTIKREP) the composition is skewed to basic and acidic residues. S105 carries the phosphoserine; by PKB/AKT1 modification. The segment at 107-128 (SLRAVSTDPPHHDHHDEFCLMP) is disordered. The span at 115 to 128 (PPHHDHHDEFCLMP) shows a compositional bias: basic and acidic residues. Residues 117-121 (HHDHH) are his cluster. Residue C125 coordinates Zn(2+).

Belongs to the BEX family. As to quaternary structure, interacts with neurotrophin receptor p75NTR/NGFR. Interacts with OMP. Phosphorylated. Phosphorylation of Ser-105 protects it from the proteasome. Post-translationally, ubiquitinated. Degraded by the proteasome. Expressed in the central nervous system. Expressed in Schwann cells from newborn sciatic nerve.

Its subcellular location is the nucleus. It localises to the cytoplasm. Signaling adapter molecule involved in p75NTR/NGFR signaling. Plays a role in cell cycle progression and neuronal differentiation. Inhibits neuronal differentiation in response to nerve growth factor (NGF). May act as a link between the cell cycle and neurotrophic factor signaling, possibly by functioning as an upstream modulator of receptor signaling, coordinating biological responses to external signals with internal cellular states. In absence of reductive stress, acts as a pseudosubstrate for the CRL2(FEM1B) complex: associates with FEM1B via zinc, thereby preventing association between FEM1B and its substrates. The sequence is that of Protein BEX1 (Bex1) from Rattus norvegicus (Rat).